Reading from the N-terminus, the 114-residue chain is Transcription factor S1 (114 aa).

The tract at residues 1–43 (MIVVKFCPKCNSMMVPKKSNGKNVYRCTKCGYEKEVPETTIVV) is N-ZR. C7, C10, C27, C30, C75, and C78 together coordinate Zn(2+). A C-ZR region spans residues 63-114 (MPSGAQKIKGVLCPSCKNDEAYFWILQTRRADEPPTRFYKCTKCGKVWREYE). Residues 71-111 (KGVLCPSCKNDEAYFWILQTRRADEPPTRFYKCTKCGKVWR) form a TFIIS-type zinc finger. Active-site residues include D94 and E95. Zn(2+)-binding residues include C103 and C106.

It belongs to the archaeal RpoM/eukaryotic RPA12/RPB9/RPC11 RNA polymerase family. In terms of assembly, interacts with RNA polymerase; probably competes with TFS4 for the same binding site. It depends on Zn(2+) as a cofactor.

In terms of biological role, induces RNA cleavage activity in the RNA polymerase. Induces rapid cleavage of a stalled transcription elongation complex with a 2-nucleotide reduction at the 3' end of the nascent RNA. Truncated RNA is able to resume elongation. During transcription elongation it enhances processivity. Involved in transcriptional proofreading and fidelity. Misincorporation of nucleotides during elongation of transcription leads to arrested elongation complexes which are rescued by TFS-promoted removal of a dinucleotide from the 3'-end. TFS1 is able to induce a cleavage resynthesis cycle in stalled elongation complexes (resulting from the next missing nucleotide or a reduced incorporation rate of a wrong nucleotide) preventing misincorporation and enabling proofreading in a post-incorporation manner. Pausing of elongation complexes is the main determinant of TFS-induced RNA cleavage. The protein is Transcription factor S1 of Saccharolobus solfataricus (strain ATCC 35092 / DSM 1617 / JCM 11322 / P2) (Sulfolobus solfataricus).